The sequence spans 461 residues: V-type ATP synthase beta chain (461 aa).

This sequence belongs to the ATPase alpha/beta chains family.

Functionally, produces ATP from ADP in the presence of a proton gradient across the membrane. The V-type beta chain is a regulatory subunit. This chain is V-type ATP synthase beta chain, found in Streptococcus pneumoniae (strain CGSP14).